Consider the following 479-residue polypeptide: Adenosylhomocysteinase (479 aa).

The substrate site is built by T65, D145, and E205. 206-208 (TTT) is a binding site for NAD(+). The substrate site is built by K235 and D239. NAD(+)-binding positions include N240, 269–274 (GYGDVG), E292, N327, 348–350 (IGH), and N393.

This sequence belongs to the adenosylhomocysteinase family. It depends on NAD(+) as a cofactor.

The protein resides in the cytoplasm. The catalysed reaction is S-adenosyl-L-homocysteine + H2O = L-homocysteine + adenosine. The protein operates within amino-acid biosynthesis; L-homocysteine biosynthesis; L-homocysteine from S-adenosyl-L-homocysteine: step 1/1. Functionally, may play a key role in the regulation of the intracellular concentration of adenosylhomocysteine. This is Adenosylhomocysteinase from Janthinobacterium sp. (strain Marseille) (Minibacterium massiliensis).